The following is a 310-amino-acid chain: uncharacterized protein (310 aa).

2 disordered regions span residues 22-163 (LARQ…PVEH) and 178-209 (EAEAETEVREAQPGRGERHAAAAAAGTDVEGD). 2 stretches are compositionally biased toward basic and acidic residues: residues 56–66 (IIRDDHHHAGP) and 183–197 (TEVREAQPGRGERHA). Residues 198-209 (AAAAAGTDVEGD) are compositionally biased toward low complexity. 3 helical membrane passes run 231–251 (ALVVLQSILAVAFGAGLFIAF), 257–277 (WNSIVALVLSVMVILGLVVSV), and 286–306 (IASTLIAVAVGALITLGPLAL).

This sequence to M.leprae ML2433.

The protein resides in the cell membrane. This is an uncharacterized protein from Mycobacterium tuberculosis (strain CDC 1551 / Oshkosh).